Reading from the N-terminus, the 576-residue chain is Ferroportin (576 aa).

The Cytoplasmic portion of the chain corresponds to 1 to 23 (MPKAGEQARQGGCCGSLANYLTS). The chain crosses the membrane as a helical span at residues 24 to 53 (AKFLLYLGHSLSTWGDRMWHFAVSVFLVEL). Aspartate 39 and histidine 43 together coordinate Fe cation. Topologically, residues 54-57 (YGNS) are extracellular. Residues 58 to 84 (LLLTAVYGLVVAGSVLVLGAIIGDWVD) form a helical membrane-spanning segment. Over 85–87 (KNA) the chain is Cytoplasmic. A helical membrane pass occupies residues 88 to 118 (RLKVAQTSLVVQNVSVILCGIILMMVFLHKN). Topologically, residues 119–126 (ELLTMYHG) are extracellular. The helical transmembrane segment at 127-162 (WVLTFCYILIITIADVANLASTATAITIQRDWIVVV) threads the bilayer. The Cytoplasmic portion of the chain corresponds to 163 to 164 (AG). A helical transmembrane segment spans residues 165 to 195 (GDRSKLADMNATIRRIDQLTNILAPMAVGQI). The Extracellular portion of the chain corresponds to 196 to 202 (MTFGSAV). A helical transmembrane segment spans residues 203 to 229 (IGCGFISGWNLVSMCVEYFLLWKVYQK). Topologically, residues 230-306 (TPALAVKAAL…DGWVSYYNQS (77 aa)) are cytoplasmic. The helical transmembrane segment at 307–333 (VFLAGMGLAFLYMTVLGFDCITTGYAY) threads the bilayer. A Fe cation-binding site is contributed by cysteine 326. Residues 334–338 (TQGLS) lie on the Extracellular side of the membrane. Residues 339–366 (GSILSILMGASAITGIMGTVAFTWLRRK) form a helical membrane-spanning segment. Residues 367–368 (CG) lie on the Cytoplasmic side of the membrane. The chain crosses the membrane as a helical span at residues 369–391 (LVRTGLISGFAQLSCLILCVISV). Residues 392 to 458 (FMPGSPLDLS…ETTPKSVPII (67 aa)) lie on the Extracellular side of the membrane. The N-linked (GlcNAc...) asparagine glycan is linked to asparagine 439. Residues 459 to 488 (SVSLLFAGVIAARIGLWSFDLTVTQLLQEN) traverse the membrane as a helical segment. Residues 489-493 (VIESE) are Cytoplasmic-facing. A helical transmembrane segment spans residues 494-518 (RGIINGVQNSMNYLLDLLHFIMVIL). Histidine 512 contributes to the Fe cation binding site. Residues 519 to 521 (APN) lie on the Extracellular side of the membrane. A helical membrane pass occupies residues 522–547 (PEAFGLLVLISVSFVAMGHIMYFRFA). The Cytoplasmic segment spans residues 548–576 (QKTLGSKLFACGADDEEVTNENQANTSVV).

It belongs to the ferroportin (FP) (TC 2.A.100) family. SLC40A subfamily. In terms of assembly, identified in a complex with STOM. Interacts with HAMP; affinity of the peptide hormone HAMP for SLC40A1 increases by 80-fold in the presence of iron and the interaction promotes SLC40A1 ubiquitination and degradation. Part of a complex composed of SLC40A1/ferroportin, TF/transferrin and HEPH/hephaestin that transfers iron from cells to transferrin. Post-translationally, polyubiquitinated by RNF217; leading to proteasomal degradation. Under conditions of high systemic iron levels, both the hormone peptide hepcidin/HAMP and holo(iron bound)-transferrin/TF induce the ubiquitination, internalization and proteasomal degradation of SLC40A1 to control iron release from cells.

It is found in the cell membrane. The protein resides in the basolateral cell membrane. The enzyme catalyses Fe(2+)(in) = Fe(2+)(out). During elevated serum iron levels, liver-derived hepcidin/HAMP negatively regulates cell surface ferroportin/SLC40A1 by inducing its ubiquitination, internalization, and degradation. Indeed, hepcidin/HAMP affinity towards ferroportin/SLC40A1 increases by 80-fold in the presence of iron. In terms of biological role, transports Fe(2+) from the inside of a cell to the outside of the cell, playing a key role for maintaining systemic iron homeostasis. Transports iron from intestinal, splenic, hepatic cells, macrophages and erythrocytes into the blood to provide iron to other tissues. Controls therefore dietary iron uptake, iron recycling by macrophages and erythrocytes, and release of iron stores in hepatocytes. When iron is in excess in serum, circulating HAMP/hepcidin levels increase resulting in a degradation of SLC40A1, thus limiting the iron efflux to plasma. The chain is Ferroportin from Canis lupus familiaris (Dog).